Reading from the N-terminus, the 145-residue chain is Large ribosomal subunit protein uL13 (145 aa).

It belongs to the universal ribosomal protein uL13 family. As to quaternary structure, part of the 50S ribosomal subunit.

In terms of biological role, this protein is one of the early assembly proteins of the 50S ribosomal subunit, although it is not seen to bind rRNA by itself. It is important during the early stages of 50S assembly. This is Large ribosomal subunit protein uL13 from Bacillus cereus (strain G9842).